We begin with the raw amino-acid sequence, 88 residues long: Small ribosomal subunit protein bS16 (88 aa).

This sequence belongs to the bacterial ribosomal protein bS16 family.

The sequence is that of Small ribosomal subunit protein bS16 from Baumannia cicadellinicola subsp. Homalodisca coagulata.